Reading from the N-terminus, the 132-residue chain is ATP synthase epsilon chain (132 aa).

This sequence belongs to the ATPase epsilon chain family. As to quaternary structure, F-type ATPases have 2 components, CF(1) - the catalytic core - and CF(0) - the membrane proton channel. CF(1) has five subunits: alpha(3), beta(3), gamma(1), delta(1), epsilon(1). CF(0) has three main subunits: a, b and c.

It is found in the cell membrane. Produces ATP from ADP in the presence of a proton gradient across the membrane. The sequence is that of ATP synthase epsilon chain from Clostridium kluyveri (strain NBRC 12016).